A 158-amino-acid polypeptide reads, in one-letter code: Endoribonuclease YbeY (158 aa).

3 residues coordinate Zn(2+): H119, H123, and H129.

The protein belongs to the endoribonuclease YbeY family. Zn(2+) serves as cofactor.

It localises to the cytoplasm. In terms of biological role, single strand-specific metallo-endoribonuclease involved in late-stage 70S ribosome quality control and in maturation of the 3' terminus of the 16S rRNA. The sequence is that of Endoribonuclease YbeY from Shewanella woodyi (strain ATCC 51908 / MS32).